The primary structure comprises 287 residues: ATP synthase gamma chain (287 aa).

This sequence belongs to the ATPase gamma chain family. In terms of assembly, F-type ATPases have 2 components, CF(1) - the catalytic core - and CF(0) - the membrane proton channel. CF(1) has five subunits: alpha(3), beta(3), gamma(1), delta(1), epsilon(1). CF(0) has three main subunits: a, b and c.

The protein resides in the cell inner membrane. Its function is as follows. Produces ATP from ADP in the presence of a proton gradient across the membrane. The gamma chain is believed to be important in regulating ATPase activity and the flow of protons through the CF(0) complex. In Enterobacter sp. (strain 638), this protein is ATP synthase gamma chain.